A 414-amino-acid polypeptide reads, in one-letter code: Esterase FrsA (414 aa).

This sequence belongs to the FrsA family.

It carries out the reaction a carboxylic ester + H2O = an alcohol + a carboxylate + H(+). Functionally, catalyzes the hydrolysis of esters. The sequence is that of Esterase FrsA from Escherichia coli O17:K52:H18 (strain UMN026 / ExPEC).